A 325-amino-acid chain; its full sequence is ATP phosphoribosyltransferase (325 aa).

This sequence belongs to the ATP phosphoribosyltransferase family. Long subfamily. Mg(2+) serves as cofactor.

It is found in the cytoplasm. It carries out the reaction 1-(5-phospho-beta-D-ribosyl)-ATP + diphosphate = 5-phospho-alpha-D-ribose 1-diphosphate + ATP. Its pathway is amino-acid biosynthesis; L-histidine biosynthesis; L-histidine from 5-phospho-alpha-D-ribose 1-diphosphate: step 1/9. Feedback inhibited by histidine. In terms of biological role, catalyzes the condensation of ATP and 5-phosphoribose 1-diphosphate to form N'-(5'-phosphoribosyl)-ATP (PR-ATP). Has a crucial role in the pathway because the rate of histidine biosynthesis seems to be controlled primarily by regulation of HisG enzymatic activity. The sequence is that of ATP phosphoribosyltransferase from Bradyrhizobium sp. (strain ORS 278).